A 651-amino-acid chain; its full sequence is PTS system N-acetylglucosamine-specific EIICBA component (651 aa).

Residues 1 to 371 (MNILGFFQRL…FNLKTPGRED (371 aa)) enclose the PTS EIIC type-1 domain. The next 12 membrane-spanning stretches (helical) occupy residues 16-36 (LPIA…PDLL), 40-60 (FIAQ…AIGV), 70-90 (GSAA…MVTI), 92-112 (PEIN…GAVY), 132-152 (FVPI…GYVW), 165-185 (WIVS…RLLI), 192-212 (VLNT…GTVF), 232-252 (GFFP…YLAA), 264-284 (LLSV…EFLF), 285-305 (LFLA…SLFI), 308-328 (ALGI…VLMY), and 339-359 (MLLV…SAVI). The region spanning 390-472 (TQLATSYIAA…KKVVTRGPVA (83 aa)) is the PTS EIIB type-1 domain. C412 acts as the Phosphocysteine intermediate; for EIIB activity in catalysis. Position 412 is a phosphocysteine; by EIIA (C412). Residues 519 to 623 (DEAFASKAVG…SMISPVVCSN (105 aa)) form the PTS EIIA type-1 domain. Zn(2+)-binding residues include H556 and H571. H571 (tele-phosphohistidine intermediate; for EIIA activity) is an active-site residue. H571 carries the post-translational modification Phosphohistidine; by HPr.

Zn(2+) serves as cofactor.

It localises to the cell inner membrane. The enzyme catalyses N(pros)-phospho-L-histidyl-[protein] + N-acetyl-D-glucosamine(out) = N-acetyl-D-glucosamine 6-phosphate(in) + L-histidyl-[protein]. Functionally, the phosphoenolpyruvate-dependent sugar phosphotransferase system (sugar PTS), a major carbohydrate active transport system, catalyzes the phosphorylation of incoming sugar substrates concomitantly with their translocation across the cell membrane. This system is involved in N-acetylglucosamine transport. This Klebsiella pneumoniae protein is PTS system N-acetylglucosamine-specific EIICBA component (nagE).